A 774-amino-acid chain; its full sequence is Vezatin (774 aa).

2 helical membrane-spanning segments follow: residues 138–158 (IATPNIWETSILFVFLSAVAA) and 163–183 (SISSSLIWGPSLILFAAFTVL). The stretch at 430-457 (VRSLQLHLKALLNEVIVLEDELDKLSSC) forms a coiled coil. Residues 746-757 (FGDEWDDDDDNE) are compositionally biased toward acidic residues. Residues 746–774 (FGDEWDDDDDNEDHDHDKERNNDSSQLEG) form a disordered region. A compositionally biased stretch (basic and acidic residues) spans 758–767 (DHDHDKERNN).

This sequence belongs to the vezatin family. As to quaternary structure, interacts with myosin VIIa and the cadherin-catenins complex.

It localises to the cell membrane. The protein localises to the cell junction. It is found in the adherens junction. The protein resides in the nucleus. In terms of biological role, plays a pivotal role in the establishment of adherens junctions and their maintenance in adult life. The polypeptide is Vezatin (vezt) (Xenopus laevis (African clawed frog)).